Reading from the N-terminus, the 320-residue chain is Olfactory receptor 2T12 (320 aa).

Residues 1 to 23 (MEMRNTTPDFILLGLFNHTRAHQ) are Extracellular-facing. N-linked (GlcNAc...) asparagine glycosylation is present at N17. Residues 24–47 (VLFMMLLATVLTSLFSNALMILLI) traverse the membrane as a helical segment. Residues 48–55 (HWDHRLHR) are Cytoplasmic-facing. Residues 56–77 (PMYFLLSQLSLMDMMLVSTTVP) traverse the membrane as a helical segment. Over 78–98 (KMAADYLTGNKAISRAGCGVQ) the chain is Extracellular. Cysteines 95 and 187 form a disulfide. A helical membrane pass occupies residues 99-118 (IFFLPTLGGGECFLLAAMAY). Residues 119–137 (DRYAAVCHPLRYPTLMSWQ) lie on the Cytoplasmic side of the membrane. The chain crosses the membrane as a helical span at residues 138-156 (LCLRMTMSSWLLGAADGLL). Topologically, residues 157–193 (QAVATLSFPYCGAHEIDHFFCEAPVLVRLACADTSVF) are extracellular. The helical transmembrane segment at 194 to 217 (ENAMYICCVLMLLVPFSLILSSYG) threads the bilayer. Topologically, residues 218-234 (LILAAVLLMRSTEARKK) are cytoplasmic. Residues 235-257 (AFATCSSHVAVVGLFYGAGIFTY) traverse the membrane as a helical segment. At 258–270 (MRPKSHRSTNHDK) the chain is on the extracellular side. Residues 271–290 (VVSAFYTMFTPLLNPLIYSV) form a helical membrane-spanning segment. Over 291–320 (RNSEVKEALKRWLGTCVNLKHQQNEAHRSR) the chain is Cytoplasmic.

It belongs to the G-protein coupled receptor 1 family.

The protein localises to the cell membrane. Odorant receptor. The chain is Olfactory receptor 2T12 (OR2T12) from Homo sapiens (Human).